The following is a 436-amino-acid chain: Transcription factor Sox-10 (436 aa).

Disordered regions lie at residues Met-1–Pro-55, Arg-145–Gly-183, His-195–Asn-257, Pro-322–Thr-346, and Ser-413–Pro-436. A Glycyl lysine isopeptide (Lys-Gly) (interchain with G-Cter in SUMO) cross-link involves residue Lys-44. The interval Asp-48 to Pro-88 is dimerization (DIM). Residues Val-90–Lys-158 constitute a DNA-binding region (HMG box). The span at Arg-145–Tyr-159 shows a compositional bias: basic and acidic residues. Polar residues-rich tracts occupy residues Ser-205–Gln-215 and Lys-331–Thr-346. Residues Ser-209–Ile-295 form a transactivation domain (TAM) region. The tract at residues Lys-327 to Pro-436 is transactivation domain (TAC). A Glycyl lysine isopeptide (Lys-Gly) (interchain with G-Cter in SUMO) cross-link involves residue Lys-331.

In terms of assembly, interacts with the sumoylation factors ube2i/ubc9 and sumo1. Sumoylated.

The protein localises to the cytoplasm. It localises to the nucleus. Its function is as follows. Acts early in neural crest formation, functioning redundantly with the other group E Sox factors sox8 and sox9 to induce neural crest progenitors. Acts downstream of wnt-signaling at the neural plate border. Involved in the specification of neural crest progenitors fated to form the pigment cell lineage. The polypeptide is Transcription factor Sox-10 (Xenopus tropicalis (Western clawed frog)).